Consider the following 193-residue polypeptide: Ribonuclease HII (193 aa).

The RNase H type-2 domain maps to 3 to 192 (SLVAGIDEVG…VRAVIDRSSA (190 aa)). The a divalent metal cation site is built by D9, E10, and D101.

This sequence belongs to the RNase HII family. It depends on Mn(2+) as a cofactor. Mg(2+) serves as cofactor.

The protein localises to the cytoplasm. It catalyses the reaction Endonucleolytic cleavage to 5'-phosphomonoester.. Its function is as follows. Endonuclease that specifically degrades the RNA of RNA-DNA hybrids. This is Ribonuclease HII from Methylococcus capsulatus (strain ATCC 33009 / NCIMB 11132 / Bath).